The following is a 77-amino-acid chain: Large ribosomal subunit protein uL29 (77 aa).

The protein belongs to the universal ribosomal protein uL29 family.

In Mycolicibacterium vanbaalenii (strain DSM 7251 / JCM 13017 / BCRC 16820 / KCTC 9966 / NRRL B-24157 / PYR-1) (Mycobacterium vanbaalenii), this protein is Large ribosomal subunit protein uL29.